A 263-amino-acid polypeptide reads, in one-letter code: RNA exonuclease 4 (263 aa).

The interval 1 to 27 is disordered; it reads MRLSSNWSKLQDGVTKKAGKKRIDKKP. Residues 17-27 are compositionally biased toward basic residues; sequence KAGKKRIDKKP. The Exonuclease domain occupies 95–247; it reads YIAMDCEFVG…EDARATMLIY (153 aa).

It belongs to the REXO4 family.

It localises to the nucleus. Functionally, exoribonuclease involved in ribosome biosynthesis. Involved in the processing of ITS1, the internal transcribed spacer localized between the 18S and 5.8S rRNAs. In Candida glabrata (strain ATCC 2001 / BCRC 20586 / JCM 3761 / NBRC 0622 / NRRL Y-65 / CBS 138) (Yeast), this protein is RNA exonuclease 4 (REX4).